The primary structure comprises 185 residues: uncharacterized protein (185 aa).

The first 24 residues, 1-24, serve as a signal peptide directing secretion; it reads MPCNRAVFGAFVLALLISLQSVYF. A helical transmembrane segment spans residues 50–70; it reads VAVNVIVEFSFDILFFLCGLL. Basic and acidic residues predominate over residues 96-113; the sequence is ELEHVSSRRRNDSRDDST. A disordered region spans residues 96–185; the sequence is ELEHVSSRRR…LFTAGGIGLP (90 aa). A compositionally biased stretch (polar residues) spans 114–126; that stretch reads VRNVSKTSPLASQ. A compositionally biased stretch (basic and acidic residues) spans 127–138; it reads RSRDHFDGDPRE. Over residues 139–155 the composition is skewed to pro residues; it reads PAPPAYSPADFYPPPAS.

It is found in the host membrane. This is an uncharacterized protein from Colorado tick fever virus (strain USA/Florio N-7180) (CTFV).